The following is a 238-amino-acid chain: Probable transcriptional regulatory protein VPA0011 (238 aa).

Belongs to the TACO1 family.

The protein localises to the cytoplasm. This Vibrio parahaemolyticus serotype O3:K6 (strain RIMD 2210633) protein is Probable transcriptional regulatory protein VPA0011.